Consider the following 434-residue polypeptide: Chaperone SurA (434 aa).

The signal sequence occupies residues 1–22; that stretch reads MKPSKHLIFALFALAISQPTMA. PpiC domains lie at 173 to 274 and 283 to 383; these read DVEY…KIMD and IEEV…QLEE.

It is found in the periplasm. It catalyses the reaction [protein]-peptidylproline (omega=180) = [protein]-peptidylproline (omega=0). In terms of biological role, chaperone involved in the correct folding and assembly of outer membrane proteins. Recognizes specific patterns of aromatic residues and the orientation of their side chains, which are found more frequently in integral outer membrane proteins. May act in both early periplasmic and late outer membrane-associated steps of protein maturation. The sequence is that of Chaperone SurA from Shewanella oneidensis (strain ATCC 700550 / JCM 31522 / CIP 106686 / LMG 19005 / NCIMB 14063 / MR-1).